Consider the following 95-residue polypeptide: Protein TusB (95 aa).

This sequence belongs to the DsrH/TusB family. As to quaternary structure, heterohexamer, formed by a dimer of trimers. The hexameric TusBCD complex contains 2 copies each of TusB, TusC and TusD. The TusBCD complex interacts with TusE.

It is found in the cytoplasm. Its function is as follows. Part of a sulfur-relay system required for 2-thiolation of 5-methylaminomethyl-2-thiouridine (mnm(5)s(2)U) at tRNA wobble positions. The sequence is that of Protein TusB from Escherichia coli (strain SMS-3-5 / SECEC).